Here is a 373-residue protein sequence, read N- to C-terminus: Phospho-N-acetylmuramoyl-pentapeptide-transferase (373 aa).

11 helical membrane passes run 16-36 (WWTKGSTSASLLGIVIFAASF), 46-66 (LLSLPLMISTLISVLIASWGI), 93-113 (PTMGGLLVVPVGLIIGSFVSV), 120-140 (QLLALSWITLAYMLIGGFDDW), 157-177 (LLLQTAASLIFLAWAGWQHWI), 185-205 (LGISIQMGFMIWPLALFVFLA), 216-236 (LDGLASGCGALVFTGLAVQLM), 242-262 (GNPVLAGFCMAMAGAWLGFLM), 270-290 (VFMGDTGSLAMGAALSGVAIL), 298-318 (LVMGGVFLAESLSVIIQVWVF), and 350-369 (MVVRRFWLSTGGLVLLGLLL).

Belongs to the glycosyltransferase 4 family. MraY subfamily. It depends on Mg(2+) as a cofactor.

The protein resides in the cell inner membrane. The catalysed reaction is UDP-N-acetyl-alpha-D-muramoyl-L-alanyl-gamma-D-glutamyl-meso-2,6-diaminopimeloyl-D-alanyl-D-alanine + di-trans,octa-cis-undecaprenyl phosphate = di-trans,octa-cis-undecaprenyl diphospho-N-acetyl-alpha-D-muramoyl-L-alanyl-D-glutamyl-meso-2,6-diaminopimeloyl-D-alanyl-D-alanine + UMP. The protein operates within cell wall biogenesis; peptidoglycan biosynthesis. In terms of biological role, catalyzes the initial step of the lipid cycle reactions in the biosynthesis of the cell wall peptidoglycan: transfers peptidoglycan precursor phospho-MurNAc-pentapeptide from UDP-MurNAc-pentapeptide onto the lipid carrier undecaprenyl phosphate, yielding undecaprenyl-pyrophosphoryl-MurNAc-pentapeptide, known as lipid I. This Prochlorococcus marinus (strain MIT 9313) protein is Phospho-N-acetylmuramoyl-pentapeptide-transferase.